The primary structure comprises 89 residues: MALTQERKNELIAEFKTHETDTGSPEVQVAILTEQINTLNDHLRTHKKDHHSRRGLLKMVGQRRNLLTYLRNKDVTRYRNLVDKLGLRR.

The protein belongs to the universal ribosomal protein uS15 family. Part of the 30S ribosomal subunit. Forms a bridge to the 50S subunit in the 70S ribosome, contacting the 23S rRNA.

Functionally, one of the primary rRNA binding proteins, it binds directly to 16S rRNA where it helps nucleate assembly of the platform of the 30S subunit by binding and bridging several RNA helices of the 16S rRNA. Forms an intersubunit bridge (bridge B4) with the 23S rRNA of the 50S subunit in the ribosome. This is Small ribosomal subunit protein uS15 from Shouchella clausii (strain KSM-K16) (Alkalihalobacillus clausii).